We begin with the raw amino-acid sequence, 91 residues long: Large ribosomal subunit protein uL23c (91 aa).

This sequence belongs to the universal ribosomal protein uL23 family. As to quaternary structure, part of the 50S ribosomal subunit.

The protein localises to the plastid. Its subcellular location is the chloroplast. Binds to 23S rRNA. The polypeptide is Large ribosomal subunit protein uL23c (rpl23) (Physcomitrium patens (Spreading-leaved earth moss)).